The sequence spans 131 residues: Profilin-3 (131 aa).

Belongs to the profilin family. As to quaternary structure, occurs in many kinds of cells as a complex with monomeric actin in a 1:1 ratio.

The protein localises to the cytoplasm. It localises to the cytoskeleton. Functionally, binds to actin and affects the structure of the cytoskeleton. At high concentrations, profilin prevents the polymerization of actin, whereas it enhances it at low concentrations. By binding to PIP2, it inhibits the formation of IP3 and DG. This Hevea brasiliensis (Para rubber tree) protein is Profilin-3.